Reading from the N-terminus, the 198-residue chain is Prostamide/prostaglandin F synthase (198 aa).

Phosphotyrosine is present on tyrosine 108.

This sequence belongs to the peroxiredoxin-like PRXL2 family. Prostamide/prostaglandin F synthase subfamily.

The protein localises to the cytoplasm. It localises to the cytosol. The enzyme catalyses prostaglandin H2 + [thioredoxin]-dithiol = prostaglandin F2alpha + [thioredoxin]-disulfide. It carries out the reaction prostamide F2alpha + [thioredoxin]-disulfide = prostamide H2 + [thioredoxin]-dithiol. Catalyzes the reduction of prostaglandin-ethanolamide H(2) (prostamide H(2)) to prostamide F(2alpha) with NADPH as proton donor. Also able to reduce prostaglandin H(2) to prostaglandin F(2alpha). This chain is Prostamide/prostaglandin F synthase (PRXL2B), found in Pongo abelii (Sumatran orangutan).